Consider the following 134-residue polypeptide: Agouti-related protein (134 aa).

The signal sequence occupies residues 1–20 (MLTTMLLSCALLLAMPTMLG). A propeptide spanning residues 21–84 (AQIGLAPLEG…VLDPEGRKAR (64 aa)) is cleaved from the precursor. 5 disulfides stabilise this stretch: Cys89–Cys104, Cys96–Cys110, Cys103–Cys121, Cys107–Cys131, and Cys112–Cys119. Residues 89–131 (CVRLHESCLGHQVPCCDPCATCYCRFFNAFCYCRKLGTATNPC) form the Agouti domain. An interaction with melanocortin receptors region spans residues 113–115 (RFF).

As to quaternary structure, interacts with melanocortin receptors MC3R, MC4R and MC5R.

The protein localises to the secreted. It is found in the golgi apparatus lumen. Its function is as follows. Plays a role in weight homeostasis. Involved in the control of feeding behavior through the central melanocortin system. Acts as alpha melanocyte-stimulating hormone antagonist by inhibiting cAMP production mediated by stimulation of melanocortin receptors within the hypothalamus and adrenal gland. Has very low activity with MC5R. Is an inverse agonist for MC3R and MC4R being able to suppress their constitutive activity. It promotes MC3R and MC4R endocytosis in an arrestin-dependent manner. The polypeptide is Agouti-related protein (AGRP) (Sus scrofa (Pig)).